Reading from the N-terminus, the 411-residue chain is Secretion apparatus protein BsaZ (411 aa).

Transmembrane regions (helical) follow at residues 28–48, 80–100, 137–157, and 175–195; these read IVAL…VDLT, IAAP…LVQS, ALLY…LYHA, and IVLT…VLIL. The disordered stretch occupies residues 341-411; that stretch reads AANRGGPPPE…APARTGDQNA (71 aa). Positions 370-404 are enriched in low complexity; that stretch reads DACADNAFPDDAPPGAAAPNAGSPDSPAPDGGAPA.

The protein belongs to the type III secretion exporter family.

Its subcellular location is the cell membrane. Part of the bsa type III secretion system, is involved in the intracellular replication of invading bacteria inside the host cell. Probably necessary for the lysis of the vacuole membrane and escape into the host cell cytoplasm. The polypeptide is Secretion apparatus protein BsaZ (bsaZ) (Burkholderia mallei (strain NCTC 10247)).